We begin with the raw amino-acid sequence, 393 residues long: Squamosa promoter-binding-like protein 17 (393 aa).

A compositionally biased stretch (low complexity) spans 40-49; sequence AAAVESSSTS. The interval 40–67 is disordered; it reads AAAVESSSTSSGGGGKKGKGVAAAAAPP. An SBP-type zinc finger spans residues 71–148; sequence PPRCQVEGCG…AGHNERRRKP (78 aa). Residues Cys-74, Cys-79, Cys-96, His-99, Cys-115, Cys-118, His-122, and Cys-134 each coordinate Zn(2+). The Bipartite nuclear localization signal signature appears at 131-147; the sequence is KKSCRRRLAGHNERRRK. Positions 137-148 are enriched in basic residues; that stretch reads RLAGHNERRRKP. Disordered regions lie at residues 137–158, 273–301, and 317–393; these read RLAG…SRYG, WDTT…GNNP, and GWNS…NWSL. 2 stretches are compositionally biased toward polar residues: residues 273-293 and 380-393; these read WDTT…STAS and GAFS…NWSL.

In terms of tissue distribution, expressed in young panicles.

It localises to the nucleus. Trans-acting factor that binds specifically to the consensus nucleotide sequence 5'-TNCGTACAA-3'. May be involved in panicle development. The chain is Squamosa promoter-binding-like protein 17 (SPL17) from Oryza sativa subsp. japonica (Rice).